Reading from the N-terminus, the 71-residue chain is Conotoxin Vc6.12 (71 aa).

Positions 1 to 19 (MQKLIILLLVAAVLMSTQA) are cleaved as a signal peptide. A propeptide spanning residues 20 to 43 (LFQEKRPMKKINFLSKGKTDAEKQ) is cleaved from the precursor. Disulfide bonds link Cys-48-Cys-62, Cys-55-Cys-66, and Cys-61-Cys-70.

This sequence belongs to the conotoxin O2 superfamily. In terms of tissue distribution, expressed by the venom duct.

The protein resides in the secreted. Inhibits voltage-gated ion channels. This chain is Conotoxin Vc6.12, found in Conus victoriae (Queen Victoria cone).